A 1904-amino-acid polypeptide reads, in one-letter code: Pericentriolar material 1 protein (1904 aa).

Disordered regions lie at residues 1 to 135 (MATG…SGEP), 159 to 179 (QEDGRGEPTMDSSQARDPQQE), 265 to 303 (HDSQTQSVPDNRRQAESLSLTREISQSRNSSVSEHQSDE), 338 to 361 (NSSFFPASSSPQRSIDQRSTTSAA), 376 to 407 (NSLASAPYPPDSLASQNESEEDDNLNPTEKLQ), 430 to 489 (SDMM…GTNN), and 520 to 559 (CHNREDDKHADLPHGEDDEVEEDRASEDSMSSHRSSLGDV). Basic and acidic residues predominate over residues 43–60 (RSSEKNKKKLGGEAETRL). Residues 107 to 118 (INFSDLDQINTN) show a composition bias toward polar residues. The stretch at 171 to 212 (SQARDPQQEAKEELENLKKQHDLLKRMLQQQEQLKALQGRQA) forms a coiled coil. The segment covering 280-298 (ESLSLTREISQSRNSSVSE) has biased composition (polar residues). Residues 301–334 (SDEKAQLFNKMRMLQGKKQKMDKLLGELHTLRDQ) are a coiled coil. The segment covering 338-348 (NSSFFPASSSP) has biased composition (low complexity). Positions 349–361 (QRSIDQRSTTSAA) are enriched in polar residues. Positions 403-429 (TEKLQKLNEVRKRLNELRELVHYYEQT) form a coiled coil. A compositionally biased stretch (acidic residues) spans 442-452 (KEEEETEDSGS). The segment covering 461–470 (PVTNIRNPQG) has biased composition (polar residues). A compositionally biased stretch (low complexity) spans 471-482 (ISSWSEINSNSN). Basic and acidic residues predominate over residues 520 to 534 (CHNREDDKHADLPHG). The segment covering 535–544 (EDDEVEEDRA) has biased composition (acidic residues). Coiled coils occupy residues 562–592 (DAEFEQKINRLMAAKQKLRQLQNLAAMVQDD) and 636–686 (LNEK…LQSA). The interval 686–706 (AGLGNSPANRQTSPATSTPAM) is disordered. Residues 687–706 (GLGNSPANRQTSPATSTPAM) are compositionally biased toward polar residues. The stretch at 731–768 (SEMRRHEILREELRRRRKQLEALMAEHQRRRELAETIS) forms a coiled coil. A disordered region spans residues 773–840 (SVKSEGSEAQ…PSMNDSFSAY (68 aa)). A compositionally biased stretch (polar residues) spans 779–804 (SEAQRTPQQSRTENRTMATWGGSTQC). The segment covering 806-830 (LDEEDGDEDGYLSDGLDQAEEEEDA) has biased composition (acidic residues). Coiled coils occupy residues 895-927 (SELSYVEEKEQWQEQINQLKKQLEFSVSICQTL) and 970-1000 (TQLSWQQNNVQRLKQMLNDLMHQQEQQCQEK). 3 disordered regions span residues 991 to 1018 (HQQEQQCQEKPSRKERGSSAPPPPSPVF), 1063 to 1082 (GFPQSSEQQQHPLDHNASGK), and 1088 to 1225 (FPKP…TGYD). Composition is skewed to polar residues over residues 1064–1073 (FPQSSEQQQH) and 1093–1102 (ESSSSTGAEN). Over residues 1103–1117 (QRSHRQPEDEVEKRS) the composition is skewed to basic and acidic residues. Residues 1141-1150 (SVQSIASGHK) are compositionally biased toward polar residues. Positions 1151-1162 (NQSDTSRRRNFD) are enriched in basic and acidic residues. Low complexity predominate over residues 1173–1182 (PDPVDPTTVT). The stretch at 1421 to 1447 (IHLDQALARMREYERMKIEAESTLDSE) forms a coiled coil. Positions 1616 to 1625 (AKEDKDETET) are enriched in basic and acidic residues. 3 disordered regions span residues 1616-1741 (AKED…VKGE), 1774-1838 (MKTE…SDED), and 1865-1904 (EAQTNSLSDELLGGGGEQDRELVGDAQTLKEPETFGAQSA). Acidic residues predominate over residues 1649-1658 (SDQEEDEESE). Positions 1668-1678 (KAETQALTNYG) are enriched in polar residues. Residues 1680 to 1695 (GEDENEDEEIEFEEGP) show a composition bias toward acidic residues. 3 stretches are compositionally biased toward polar residues: residues 1698-1720 (VQTSLQASSETATENEQISSQEL), 1728-1737 (ILSSEQQSVN), and 1779-1791 (SSSSLPGNETQML). Low complexity predominate over residues 1800 to 1812 (SSAGSSESSMAGS). The span at 1881 to 1897 (EQDRELVGDAQTLKEPE) shows a compositional bias: basic and acidic residues.

The protein belongs to the PCM1 family. In terms of assembly, self-associates.

It is found in the cytoplasm. The protein resides in the cytoskeleton. It localises to the microtubule organizing center. The protein localises to the centrosome. Its subcellular location is the cytoplasmic granule. It is found in the centriolar satellite. The protein resides in the cilium basal body. Its function is as follows. Required for centrosome assembly and function. Essential for the correct localization of several centrosomal proteins including CETN3 and PCNT. Required to anchor microtubules to the centrosome. Probably involved in the biogenesis of cilia. The sequence is that of Pericentriolar material 1 protein (PCM1) from Gallus gallus (Chicken).